Consider the following 248-residue polypeptide: 2-acetamido-2-deoxy-D-galactose-binding seed lectin 2 (248 aa).

A glycan (N-linked (GlcNAc...) asparagine; partial) is linked at Asn-119. Mn(2+) contacts are provided by Glu-128 and Asp-130. Asp-130, Tyr-132, Asn-134, and Asp-138 together coordinate Ca(2+). Residues Asp-138 and His-144 each contribute to the Mn(2+) site.

This sequence belongs to the leguminous lectin family.

The sequence is that of 2-acetamido-2-deoxy-D-galactose-binding seed lectin 2 from Cytisus scoparius (Scotch broom).